Reading from the N-terminus, the 495-residue chain is Histidine--tRNA ligase (495 aa).

Residues 1 to 10 are compositionally biased toward polar residues; sequence MTTDSEQPNT. The interval 1-24 is disordered; that stretch reads MTTDSEQPNTDFRPEARAPRGFAD. Residues 12-24 show a composition bias toward basic and acidic residues; it reads FRPEARAPRGFAD.

The protein belongs to the class-II aminoacyl-tRNA synthetase family. Homodimer.

It is found in the cytoplasm. It carries out the reaction tRNA(His) + L-histidine + ATP = L-histidyl-tRNA(His) + AMP + diphosphate + H(+). The protein is Histidine--tRNA ligase (hisS) of Caulobacter vibrioides (strain ATCC 19089 / CIP 103742 / CB 15) (Caulobacter crescentus).